The primary structure comprises 203 residues: Thymidylate kinase (203 aa).

14–21 (GGEGIGKS) is a binding site for ATP.

The protein belongs to the thymidylate kinase family.

The catalysed reaction is dTMP + ATP = dTDP + ADP. In terms of biological role, phosphorylation of dTMP to form dTDP in both de novo and salvage pathways of dTTP synthesis. The polypeptide is Thymidylate kinase (Rickettsia conorii (strain ATCC VR-613 / Malish 7)).